The chain runs to 428 residues: Serine--tRNA ligase (428 aa).

235-237 (TAE) contributes to the L-serine binding site. 266-268 (RSE) lines the ATP pocket. Residue glutamate 289 participates in L-serine binding. 353 to 356 (EISS) contacts ATP. An L-serine-binding site is contributed by serine 389.

The protein belongs to the class-II aminoacyl-tRNA synthetase family. Type-1 seryl-tRNA synthetase subfamily. In terms of assembly, homodimer. The tRNA molecule binds across the dimer.

It is found in the cytoplasm. The catalysed reaction is tRNA(Ser) + L-serine + ATP = L-seryl-tRNA(Ser) + AMP + diphosphate + H(+). It catalyses the reaction tRNA(Sec) + L-serine + ATP = L-seryl-tRNA(Sec) + AMP + diphosphate + H(+). It functions in the pathway aminoacyl-tRNA biosynthesis; selenocysteinyl-tRNA(Sec) biosynthesis; L-seryl-tRNA(Sec) from L-serine and tRNA(Sec): step 1/1. Its function is as follows. Catalyzes the attachment of serine to tRNA(Ser). Is also able to aminoacylate tRNA(Sec) with serine, to form the misacylated tRNA L-seryl-tRNA(Sec), which will be further converted into selenocysteinyl-tRNA(Sec). In Shewanella baltica (strain OS155 / ATCC BAA-1091), this protein is Serine--tRNA ligase.